The sequence spans 146 residues: Large ribosomal subunit protein uL15 (146 aa).

The segment at 1–56 (MRLHDLRPVPGSRQKPTRKGQGIGSGLGKTAGRGQKGQKARSGGGVRPGFEGGQMP) is disordered. 2 stretches are compositionally biased toward gly residues: residues 21–35 (QGIG…GRGQ) and 42–52 (SGGGVRPGFEG).

The protein belongs to the universal ribosomal protein uL15 family. Part of the 50S ribosomal subunit.

Its function is as follows. Binds to the 23S rRNA. This chain is Large ribosomal subunit protein uL15, found in Carboxydothermus hydrogenoformans (strain ATCC BAA-161 / DSM 6008 / Z-2901).